The following is a 76-amino-acid chain: Acyl carrier protein (76 aa).

The 75-residue stretch at serine 2–glutamine 76 folds into the Carrier domain. Serine 36 is subject to O-(pantetheine 4'-phosphoryl)serine.

This sequence belongs to the acyl carrier protein (ACP) family. In terms of processing, 4'-phosphopantetheine is transferred from CoA to a specific serine of apo-ACP by AcpS. This modification is essential for activity because fatty acids are bound in thioester linkage to the sulfhydryl of the prosthetic group.

It is found in the cytoplasm. Its pathway is lipid metabolism; fatty acid biosynthesis. In terms of biological role, carrier of the growing fatty acid chain in fatty acid biosynthesis. This is Acyl carrier protein from Heliobacterium modesticaldum (strain ATCC 51547 / Ice1).